Here is a 317-residue protein sequence, read N- to C-terminus: Inositol oxygenase 4 (317 aa).

Substrate is bound by residues Arg58 and 115-117; that span reads DES. The Fe cation site is built by His128, His153, and Asp154. Residues Lys157 and 174-175 contribute to the substrate site; that span reads GD. Residues His226, His252, and Asp285 each contribute to the Fe cation site. Substrate is bound at residue 252–253; the sequence is HS.

The protein belongs to the myo-inositol oxygenase family. Requires Fe cation as cofactor. In terms of tissue distribution, expressed in flowers, leaves, siliques, and to a lesser extent in roots.

The protein resides in the cytoplasm. The enzyme catalyses myo-inositol + O2 = D-glucuronate + H2O + H(+). It participates in polyol metabolism; myo-inositol degradation into D-glucuronate; D-glucuronate from myo-inositol: step 1/1. In terms of biological role, catalyzes the oxygenative cleavage of myo-inositol to D-glucuronate. Involved in the biosynthesis of UDP-glucuronic acid (UDP-GlcA), providing nucleotide sugars for cell-wall polymers. May be also involved in plant ascorbate biosynthesis. The sequence is that of Inositol oxygenase 4 (MIOX4) from Arabidopsis thaliana (Mouse-ear cress).